Reading from the N-terminus, the 341-residue chain is Dual oxidase maturation factor 1 (341 aa).

Over 1-24 the chain is Extracellular; it reads MAALGHTLPFYTGTKPTFPMDTTL. The helical transmembrane segment at 25–45 threads the bilayer; the sequence is AVIITIFLTALVTFIIILPGI. Over 46–51 the chain is Cytoplasmic; sequence RGKTRL. The chain crosses the membrane as a helical span at residues 52–72; that stretch reads FWLLRVVTSLFIGAVILAVNF. At 73-183 the chain is on the extracellular side; that stretch reads SSEWSVGHVN…RLAGHYASAM (111 aa). Asparagine 84, asparagine 109, and asparagine 121 each carry an N-linked (GlcNAc...) asparagine glycan. The chain crosses the membrane as a helical span at residues 184-204; sequence LWVAFLCWLLANVMLSMPVLV. Position 205 (tyrosine 205) is a topological domain, cytoplasmic. A helical membrane pass occupies residues 206–226; it reads GGHMLLATGLFQLLALFFFSM. Over 227-249 the chain is Extracellular; sequence TTSLISPCPLRLGTAVLHTHHGP. Residues 250-270 traverse the membrane as a helical segment; that stretch reads AFWITLATGLLCILLGLVMAV. Over 271–341 the chain is Cytoplasmic; the sequence is AHRMQPHRLK…EHPKESDCSL (71 aa).

This sequence belongs to the DUOXA family. In terms of assembly, may interact with NUMB.

Its subcellular location is the membrane. Functionally, may be required for the maturation and the transport from the endoplasmic reticulum to the plasma membrane of functional DUOX1. The chain is Dual oxidase maturation factor 1 (Duoxa1) from Mus musculus (Mouse).